A 162-amino-acid chain; its full sequence is Large ribosomal subunit protein uL10 (162 aa).

This sequence belongs to the universal ribosomal protein uL10 family. In terms of assembly, part of the ribosomal stalk of the 50S ribosomal subunit. The N-terminus interacts with L11 and the large rRNA to form the base of the stalk. The C-terminus forms an elongated spine to which L12 dimers bind in a sequential fashion forming a multimeric L10(L12)X complex.

Functionally, forms part of the ribosomal stalk, playing a central role in the interaction of the ribosome with GTP-bound translation factors. In Vibrio cholerae serotype O1 (strain ATCC 39541 / Classical Ogawa 395 / O395), this protein is Large ribosomal subunit protein uL10.